The sequence spans 911 residues: DNA ligase 4 (911 aa).

12 residues coordinate ATP: Glu271, Thr272, Lys273, Leu274, Arg278, Glu331, Lys345, Phe367, Glu427, Lys432, Lys449, and Lys451. Catalysis depends on Lys273, which acts as the N6-AMP-lysine intermediate. Residue Glu331 participates in Mg(2+) binding. Glu427 is a binding site for Mg(2+). The required for catalytic activity stretch occupies residues 610–620 (LATKHLHVGDD). BRCT domains are found at residues 654-743 (KVSN…PRFM) and 808-911 (SPLS…QYLL).

Belongs to the ATP-dependent DNA ligase family. As to quaternary structure, interacts with XRCC4; the LIG4-XRCC4 subcomplex has a 1:2 stoichiometry and XRCC4 is required for LIG4 stability. Component of the core long-range non-homologous end joining (NHEJ) complex (also named DNA-PK complex) composed of PRKDC, LIG4, XRCC4, XRCC6/Ku70, XRCC5/Ku86 and NHEJ1/XLF. Additional component of the NHEJ complex includes PAXX. Following autophosphorylation, PRKDC dissociates from DNA, leading to formation of the short-range NHEJ complex, composed of LIG4, XRCC4, XRCC6/Ku70, XRCC5/Ku86 and NHEJ1/XLF. Interacts with DCLRE1C; the interaction is direct. Interacts with APLF. Mg(2+) serves as cofactor.

Its subcellular location is the nucleus. The catalysed reaction is ATP + (deoxyribonucleotide)n-3'-hydroxyl + 5'-phospho-(deoxyribonucleotide)m = (deoxyribonucleotide)n+m + AMP + diphosphate.. Functionally, DNA ligase involved in DNA non-homologous end joining (NHEJ); required for double-strand break (DSB) repair and V(D)J recombination. Catalyzes the NHEJ ligation step of the broken DNA during DSB repair by resealing the DNA breaks after the gap filling is completed. Joins single-strand breaks in a double-stranded polydeoxynucleotide in an ATP-dependent reaction. LIG4 is mechanistically flexible: it can ligate nicks as well as compatible DNA overhangs alone, while in the presence of XRCC4, it can ligate ends with 2-nucleotides (nt) microhomology and 1-nt gaps. Forms a subcomplex with XRCC4; the LIG4-XRCC4 subcomplex is responsible for the NHEJ ligation step and XRCC4 enhances the joining activity of LIG4. Binding of the LIG4-XRCC4 complex to DNA ends is dependent on the assembly of the DNA-dependent protein kinase complex DNA-PK to these DNA ends. LIG4 regulates nuclear localization of XRCC4. The chain is DNA ligase 4 from Mus musculus (Mouse).